The chain runs to 243 residues: Urease accessory protein UreF 2 (243 aa).

This sequence belongs to the UreF family. UreD, UreF and UreG form a complex that acts as a GTP-hydrolysis-dependent molecular chaperone, activating the urease apoprotein by helping to assemble the nickel containing metallocenter of UreC. The UreE protein probably delivers the nickel.

The protein resides in the cytoplasm. Its function is as follows. Required for maturation of urease via the functional incorporation of the urease nickel metallocenter. The sequence is that of Urease accessory protein UreF 2 from Brucella suis (strain ATCC 23445 / NCTC 10510).